A 470-amino-acid chain; its full sequence is Pyoverdine export outer membrane protein OpmQ (470 aa).

A signal peptide spans 1–18 (MTLPRHLCLLPLSLSLLA). Cysteine 19 carries the N-palmitoyl cysteine lipid modification. A lipid anchor (S-diacylglycerol cysteine) is attached at cysteine 19.

It belongs to the outer membrane factor (OMF) (TC 1.B.17) family. Part of the tripartite efflux system PvdRT-OpmQ, which is composed of an inner membrane component with both ATPase and permease domains, PvdT, a periplasmic membrane fusion protein, PvdR, and an outer membrane component, OpmQ.

The protein localises to the cell outer membrane. Part of the tripartite efflux system PvdRT-OpmQ required for the secretion into the extracellular milieu of the siderophore pyoverdine (PVD), which is involved in iron acquisition. The system is responsible for export of newly synthesized PVD after the final steps of biosynthesis have taken place in the periplasm. It is also responsible for recycling of PVD after internalization of ferri-PVD into the periplasm by the outer-membrane receptor FpvA and release of iron from PVD, thus making PVD available for new cycles of iron uptake. Contributes to resistance against ampicillin. The polypeptide is Pyoverdine export outer membrane protein OpmQ (Pseudomonas putida (strain ATCC 47054 / DSM 6125 / CFBP 8728 / NCIMB 11950 / KT2440)).